Here is a 187-residue protein sequence, read N- to C-terminus: Elongation factor P (187 aa).

Belongs to the elongation factor P family.

The protein localises to the cytoplasm. It functions in the pathway protein biosynthesis; polypeptide chain elongation. Its function is as follows. Involved in peptide bond synthesis. Stimulates efficient translation and peptide-bond synthesis on native or reconstituted 70S ribosomes in vitro. Probably functions indirectly by altering the affinity of the ribosome for aminoacyl-tRNA, thus increasing their reactivity as acceptors for peptidyl transferase. This Rhizorhabdus wittichii (strain DSM 6014 / CCUG 31198 / JCM 15750 / NBRC 105917 / EY 4224 / RW1) (Sphingomonas wittichii) protein is Elongation factor P.